The primary structure comprises 227 residues: Cytochrome c oxidase subunit 2 (227 aa).

Topologically, residues 1 to 14 are mitochondrial intermembrane; it reads MPYPLQLGLQDATS. Residues 15–45 form a helical membrane-spanning segment; it reads PIMEELTHFHDHTLMIVFLISSLVLYIISSM. Residues 46–59 lie on the Mitochondrial matrix side of the membrane; sequence LTTKLTHTSTMDAQ. Residues 60–87 traverse the membrane as a helical segment; it reads EVETIWTILPAMILILIALPSLRILYMM. The Mitochondrial intermembrane portion of the chain corresponds to 88 to 227; the sequence is DEINDPSLTV…YFEDWSASLL (140 aa). The Cu cation site is built by His-161, Cys-196, Glu-198, Cys-200, His-204, and Met-207. Glu-198 is a binding site for Mg(2+).

The protein belongs to the cytochrome c oxidase subunit 2 family. As to quaternary structure, component of the cytochrome c oxidase (complex IV, CIV), a multisubunit enzyme composed of 14 subunits. The complex is composed of a catalytic core of 3 subunits MT-CO1, MT-CO2 and MT-CO3, encoded in the mitochondrial DNA, and 11 supernumerary subunits COX4I, COX5A, COX5B, COX6A, COX6B, COX6C, COX7A, COX7B, COX7C, COX8 and NDUFA4, which are encoded in the nuclear genome. The complex exists as a monomer or a dimer and forms supercomplexes (SCs) in the inner mitochondrial membrane with NADH-ubiquinone oxidoreductase (complex I, CI) and ubiquinol-cytochrome c oxidoreductase (cytochrome b-c1 complex, complex III, CIII), resulting in different assemblies (supercomplex SCI(1)III(2)IV(1) and megacomplex MCI(2)III(2)IV(2)). Found in a complex with TMEM177, COA6, COX18, COX20, SCO1 and SCO2. Interacts with TMEM177 in a COX20-dependent manner. Interacts with COX20. Interacts with COX16. Cu cation is required as a cofactor.

It localises to the mitochondrion inner membrane. The catalysed reaction is 4 Fe(II)-[cytochrome c] + O2 + 8 H(+)(in) = 4 Fe(III)-[cytochrome c] + 2 H2O + 4 H(+)(out). Its function is as follows. Component of the cytochrome c oxidase, the last enzyme in the mitochondrial electron transport chain which drives oxidative phosphorylation. The respiratory chain contains 3 multisubunit complexes succinate dehydrogenase (complex II, CII), ubiquinol-cytochrome c oxidoreductase (cytochrome b-c1 complex, complex III, CIII) and cytochrome c oxidase (complex IV, CIV), that cooperate to transfer electrons derived from NADH and succinate to molecular oxygen, creating an electrochemical gradient over the inner membrane that drives transmembrane transport and the ATP synthase. Cytochrome c oxidase is the component of the respiratory chain that catalyzes the reduction of oxygen to water. Electrons originating from reduced cytochrome c in the intermembrane space (IMS) are transferred via the dinuclear copper A center (CU(A)) of subunit 2 and heme A of subunit 1 to the active site in subunit 1, a binuclear center (BNC) formed by heme A3 and copper B (CU(B)). The BNC reduces molecular oxygen to 2 water molecules using 4 electrons from cytochrome c in the IMS and 4 protons from the mitochondrial matrix. The polypeptide is Cytochrome c oxidase subunit 2 (MT-CO2) (Dugong dugon (Dugong)).